The chain runs to 175 residues: Disulfide bond formation protein B (175 aa).

Topologically, residues 1–13 (MVSNWLDAAPRRV) are cytoplasmic. Residues 14–30 (LALISAACIAMLAFGMY) form a helical membrane-spanning segment. Topologically, residues 31 to 48 (LQHVVGLEPCPMCIVQRY) are periplasmic. Cysteines 40 and 43 form a disulfide. Residues 49-65 (ALIGVAVFTGLGSLRGG) traverse the membrane as a helical segment. At 66 to 70 (RGWWM) the chain is on the cytoplasmic side. The chain crosses the membrane as a helical span at residues 71 to 88 (TWGVLALLLSGFGAFVAA). Over 89–144 (RQSWLQWYPPEIATCGRDFYGMIENFPISRAIPMIFRGSGDCAAIDWTFLGGSIAN) the chain is Periplasmic. Cysteine 103 and cysteine 130 are joined by a disulfide. A helical transmembrane segment spans residues 145–163 (WSFVCFVVMALVLLVMLLR). The Cytoplasmic portion of the chain corresponds to 164–175 (APRPARGGFSAA).

This sequence belongs to the DsbB family.

Its subcellular location is the cell inner membrane. In terms of biological role, required for disulfide bond formation in some periplasmic proteins. Acts by oxidizing the DsbA protein. This Paracidovorax citrulli (strain AAC00-1) (Acidovorax citrulli) protein is Disulfide bond formation protein B.